The following is a 630-amino-acid chain: GTPase-activating protein NEL1 (630 aa).

Belongs to the SEC23/SEC24 family. SEC23 subfamily.

The protein localises to the cytoplasm. It is found in the nucleus. Functionally, acts as a GTPase-activating protein (GAP) for SAR1. Contrary to its SEC23 homolog, NEL1 does not associate with SEC24 and its homologs, nor does it associate with the COPII components, suggesting that it is unlikely that NEL1 functions as a structural component of the vesicle coat machinery. May function as a signaling molecule. The chain is GTPase-activating protein NEL1 from Saccharomyces cerevisiae (strain ATCC 204508 / S288c) (Baker's yeast).